Reading from the N-terminus, the 225-residue chain is Class E basic helix-loop-helix protein 23 (225 aa).

Residues 35–104 (EAARGYGTPG…PREQRSLRLS (70 aa)) form a disordered region. The 55-residue stretch at 100–154 (SLRLSINARERRRMHDLNDALDGLRAVIPYAHSPSVRKLSKIATLLLAKNYILMQ) folds into the bHLH domain.

The protein localises to the nucleus. In terms of biological role, may function as transcriptional repressor. May modulate the expression of genes required for the differentiation and/or maintenance of pancreatic and neuronal cell types. May be important for rod bipolar cell maturation. The protein is Class E basic helix-loop-helix protein 23 (BHLHE23) of Homo sapiens (Human).